Consider the following 135-residue polypeptide: ATP synthase epsilon chain 1 (135 aa).

It belongs to the ATPase epsilon chain family. In terms of assembly, F-type ATPases have 2 components, CF(1) - the catalytic core - and CF(0) - the membrane proton channel. CF(1) has five subunits: alpha(3), beta(3), gamma(1), delta(1), epsilon(1). CF(0) has three main subunits: a, b and c.

It localises to the cell inner membrane. Its function is as follows. Produces ATP from ADP in the presence of a proton gradient across the membrane. The protein is ATP synthase epsilon chain 1 of Nitrobacter hamburgensis (strain DSM 10229 / NCIMB 13809 / X14).